The chain runs to 157 residues: Endoribonuclease YbeY (157 aa).

The Zn(2+) site is built by H114, H118, and H124.

The protein belongs to the endoribonuclease YbeY family. It depends on Zn(2+) as a cofactor.

It is found in the cytoplasm. Its function is as follows. Single strand-specific metallo-endoribonuclease involved in late-stage 70S ribosome quality control and in maturation of the 3' terminus of the 16S rRNA. The chain is Endoribonuclease YbeY from Edwardsiella ictaluri (strain 93-146).